Here is a 160-residue protein sequence, read N- to C-terminus: Phosphopantetheine adenylyltransferase (160 aa).

Residue Ser-9 participates in substrate binding. ATP contacts are provided by residues 9–10 (SF) and His-17. Positions 41, 73, and 87 each coordinate substrate. Residues 88 to 90 (GMR), Glu-98, and 123 to 129 (YTFFSSS) contribute to the ATP site.

The protein belongs to the bacterial CoaD family. Homohexamer. Requires Mg(2+) as cofactor.

The protein localises to the cytoplasm. The catalysed reaction is (R)-4'-phosphopantetheine + ATP + H(+) = 3'-dephospho-CoA + diphosphate. The protein operates within cofactor biosynthesis; coenzyme A biosynthesis; CoA from (R)-pantothenate: step 4/5. Its function is as follows. Reversibly transfers an adenylyl group from ATP to 4'-phosphopantetheine, yielding dephospho-CoA (dPCoA) and pyrophosphate. The chain is Phosphopantetheine adenylyltransferase from Roseiflexus castenholzii (strain DSM 13941 / HLO8).